The sequence spans 243 residues: CR(VI) reductase (243 aa).

Belongs to the flavin oxidoreductase frp family. FMN serves as cofactor.

The sequence is that of CR(VI) reductase (chrR) from Pseudomonas sp. (strain G-1).